The following is a 332-amino-acid chain: Glycine betaine-binding periplasmic protein OusX (332 aa).

The first 21 residues, 1 to 21 (MRNISMATLALTTVLSTGLFA), serve as a signal peptide directing secretion.

In terms of assembly, the complex is composed of two ATP-binding proteins (OusV), two transmembrane proteins (OusW) and a solute-binding protein (OusX).

The protein localises to the periplasm. Part of the OusB ABC transporter complex involved in glycine betaine and choline uptake. Binds glycine betaine. This is Glycine betaine-binding periplasmic protein OusX from Dickeya dadantii (strain 3937) (Erwinia chrysanthemi (strain 3937)).